The primary structure comprises 80 residues: Exodeoxyribonuclease 7 small subunit (80 aa).

Belongs to the XseB family. In terms of assembly, heterooligomer composed of large and small subunits.

The protein localises to the cytoplasm. The enzyme catalyses Exonucleolytic cleavage in either 5'- to 3'- or 3'- to 5'-direction to yield nucleoside 5'-phosphates.. Bidirectionally degrades single-stranded DNA into large acid-insoluble oligonucleotides, which are then degraded further into small acid-soluble oligonucleotides. The polypeptide is Exodeoxyribonuclease 7 small subunit (Rickettsia typhi (strain ATCC VR-144 / Wilmington)).